The chain runs to 353 residues: Histidinol-phosphate aminotransferase (353 aa).

Lys-211 is subject to N6-(pyridoxal phosphate)lysine.

This sequence belongs to the class-II pyridoxal-phosphate-dependent aminotransferase family. Histidinol-phosphate aminotransferase subfamily. In terms of assembly, homodimer. Pyridoxal 5'-phosphate serves as cofactor.

The catalysed reaction is L-histidinol phosphate + 2-oxoglutarate = 3-(imidazol-4-yl)-2-oxopropyl phosphate + L-glutamate. It participates in amino-acid biosynthesis; L-histidine biosynthesis; L-histidine from 5-phospho-alpha-D-ribose 1-diphosphate: step 7/9. This is Histidinol-phosphate aminotransferase from Marinomonas sp. (strain MWYL1).